Here is a 76-residue protein sequence, read N- to C-terminus: RNA-binding protein KhpA (76 aa).

One can recognise a KH domain in the interval 29–76 (SLHIELSVHPDDMGKVIGKQGRTAKALRSVVYAAATKQKRRVRLDIID).

This sequence belongs to the KhpA RNA-binding protein family. As to quaternary structure, forms a complex with KhpB.

The protein localises to the cytoplasm. Its function is as follows. A probable RNA chaperone. Forms a complex with KhpB which binds to cellular RNA and controls its expression. Plays a role in peptidoglycan (PG) homeostasis and cell length regulation. The protein is RNA-binding protein KhpA of Halalkalibacterium halodurans (strain ATCC BAA-125 / DSM 18197 / FERM 7344 / JCM 9153 / C-125) (Bacillus halodurans).